A 572-amino-acid polypeptide reads, in one-letter code: Transcription factor E3 (572 aa).

S47 is modified (phosphoserine; by MTOR). Low complexity predominate over residues 87 to 125; the sequence is TTPATLSASSSAGGSRTPAMSSSSSRVLLRQQLMRAQAQ. Residues 87–152 are disordered; that stretch reads TTPATLSASS…SPAPASPAIS (66 aa). The segment covering 126–135 has biased composition (basic and acidic residues); it reads EQERRERREQ. R187 is subject to Asymmetric dimethylarginine. Residues 210–248 are disordered; the sequence is LASQALTPPPGPSSAQPLPAPETAHATGPTGSAPNSPMA. The interval 259-270 is strong transcription activation domain; sequence EIDDVIDEIISL. S320 is modified (phosphoserine; by MTOR). K338 participates in a covalent cross-link: Glycyl lysine isopeptide (Lys-Gly) (interchain with G-Cter in SUMO2). The bHLH domain maps to 345-398; the sequence is QKKDNHNLIERRRRFNINDRIKELGTLIPKSNDPEMRWNKGTILKASVDYIRKL. The Nuclear localization signal signature appears at 355-358; the sequence is RRRR. Positions 408 to 429 are leucine-zipper; it reads LESRQRSLEQANRSLQLRIQEL. Disordered regions lie at residues 439 to 495 and 530 to 572; these read PVPP…APPS and VGGL…EEES. Over residues 446–457 the composition is skewed to low complexity; the sequence is LLSLTTSSVSDS. Phosphoserine occurs at positions 539, 545, 551, 553, 557, and 565. Residues 543 to 572 are compositionally biased toward low complexity; that stretch reads AASDPLLSSVSPAVSKASSRRSSFSMEEES.

This sequence belongs to the MiT/TFE family. Homodimer and heterodimer; with TFEB or MITF. Interacts with RRAGC/RagC GDP-bound and RRAGD/RagD GDP-bound; promoting its recruitment to lysosomal membrane in the presence of nutrients. Interacts with TSC22D1; the interaction is enhanced in the presence of TGF-beta. In terms of processing, sumoylated; does not affect dimerization with MITF. Phosphorylation ar Ser-47 and Ser-320 by MTOR via non-canonical mTORC1 pathway regulates its stability and subcellular location, respectively. When nutrients are present, phosphorylation by MTOR at Ser-47 promotes ubiquitination by the SCF(BTRC) complex, followed by degradation. When nutrients are present, phosphorylation by MTOR at Ser-320 also promotes association with 14-3-3/YWHA adapters and retention in the cytosol. Phosphorylation at Ser-47 plays a more critical role than phosphorylation at Ser-320 for TFE3 inactivation. Inhibition of mTORC1, starvation and lysosomal disruption, promotes dephosphorylation and transcription factor activity. Post-translationally, ubiquitinated by the SCF(BTRC) and SCF(FBXW11) complexes following phosphorylation at Ser-47 by MTOR, leading to its degradation by the proteasome. Widely expressed.

Its subcellular location is the cytoplasm. It localises to the cytosol. The protein resides in the nucleus. It is found in the lysosome membrane. Transcription factor that acts as a master regulator of lysosomal biogenesis and immune response. Specifically recognizes and binds E-box sequences (5'-CANNTG-3'); efficient DNA-binding requires dimerization with itself or with another MiT/TFE family member such as TFEB or MITF. Involved in the cellular response to amino acid availability by acting downstream of MTOR: in the presence of nutrients, TFE3 phosphorylation by MTOR promotes its inactivation. Upon starvation or lysosomal stress, inhibition of MTOR induces TFE3 dephosphorylation, resulting in transcription factor activity. Specifically recognizes and binds the CLEAR-box sequence (5'-GTCACGTGAC-3') present in the regulatory region of many lysosomal genes, leading to activate their expression, thereby playing a central role in expression of lysosomal genes. Maintains the pluripotent state of embryonic stem cells by promoting the expression of genes such as ESRRB; mTOR-dependent TFE3 cytosolic retention and inactivation promotes exit from pluripotency. Required to maintain the naive pluripotent state of hematopoietic stem cell; mTOR-dependent cytoplasmic retention of TFE3 promotes the exit of hematopoietic stem cell from pluripotency. TFE3 activity is also involved in the inhibition of neuronal progenitor differentiation. Acts as a positive regulator of browning of adipose tissue by promoting expression of target genes; mTOR-dependent phosphorylation promotes cytoplasmic retention of TFE3 and inhibits browning of adipose tissue. In association with TFEB, activates the expression of CD40L in T-cells, thereby playing a role in T-cell-dependent antibody responses in activated CD4(+) T-cells and thymus-dependent humoral immunity. Specifically recognizes the MUE3 box, a subset of E-boxes, present in the immunoglobulin enhancer. It also binds very well to a USF/MLTF site. Promotes TGF-beta-induced transcription of COL1A2; via its interaction with TSC22D1 at E-boxes in the gene proximal promoter. May regulate lysosomal positioning in response to nutrient deprivation by promoting the expression of PIP4P1. This is Transcription factor E3 from Mus musculus (Mouse).